A 410-amino-acid chain; its full sequence is Angiopoietin-related protein 4 (410 aa).

The first 23 residues, 1–23 (MRCAPTAGAALMLCAATAGLLSA), serve as a signal peptide directing secretion. Residues 81-106 (KDPEGSAAPPRAQANLVNPGGGDASP) are disordered. Positions 107 to 155 (ETLRSLKTQLEAQNSRIQQLFQKVAQQQRHLEKQQLRIQNLQSQMDHLA) form a coiled coil. N-linked (GlcNAc...) asparagine glycosylation is present at Asn-184. A Fibrinogen C-terminal domain is found at 186–408 (SRLHRLPRDC…ATTILVQPTA (223 aa)). 2 disulfides stabilise this stretch: Cys-195/Cys-223 and Cys-348/Cys-361.

As to quaternary structure, homooligomer; disulfide-linked via Cys residues in the N-terminal part of the protein. The homooligomer undergoes proteolytic processing to release the ANGPTL4 C-terminal chain, which circulates as a monomer. The homooligomer unprocessed form is able to interact with the extracellular matrix. Post-translationally, N-glycosylated. In terms of processing, forms disulfide-linked dimers and tetramers. Cleaved into a smaller N-terminal chain and a larger chain that contains the fibrinogen C-terminal domain; both cleaved and uncleaved forms are detected in the extracellular space. The cleaved form is not present within the cell.

It localises to the secreted. The protein localises to the extracellular space. The protein resides in the extracellular matrix. Functionally, mediates inactivation of the lipoprotein lipase LPL, and thereby plays a role in the regulation of triglyceride clearance from the blood serum and in lipid metabolism. May also play a role in regulating glucose homeostasis and insulin sensitivity. Inhibits proliferation, migration, and tubule formation of endothelial cells and reduces vascular leakage. Upon heterologous expression, inhibits the adhesion of endothelial cell to the extracellular matrix (ECM), and inhibits the reorganization of the actin cytoskeleton, formation of actin stress fibers and focal adhesions in endothelial cells that have adhered to ANGPTL4-containing ECM (in vitro). Depending on context, may modulate tumor-related angiogenesis. Mediates inactivation of the lipoprotein lipase LPL, and thereby plays an important role in the regulation of triglyceride clearance from the blood serum and in lipid metabolism. Has higher activity in LPL inactivation than the uncleaved protein. This is Angiopoietin-related protein 4 (ANGPTL4) from Bos taurus (Bovine).